The following is a 627-amino-acid chain: Spindle assembly abnormal protein 6 homolog (627 aa).

The PISA domain maps to 39–91; the sequence is VHRKDLVVRLTDDTDLYFLYNLIISEEDFQSLKVQQGLLIDFTSFPQKFIDLL. Positions 153–473 form a coiled coil; that stretch reads LASCLSSVKE…SREVLKTNEN (321 aa). 2 disordered regions span residues 187–257 and 561–586; these read QTLS…LQTK and EVSPAAFSQPANKENSEPVGLDSKYF. Residues 191–201 are compositionally biased toward basic and acidic residues; sequence EKSRELDKLRS. Positions 202-213 are enriched in polar residues; the sequence is EWTSQTTSLSSR. The span at 214–226 shows a compositional bias: basic and acidic residues; it reads HMQDLTAEREKAL. Residues 229 to 238 show a composition bias toward low complexity; the sequence is QSRLQQQNEQ.

Nine homodimers form a cartwheel structure with an internal diameter of 23 nM and radial spokes connecting to the microtubule triplets.

The protein localises to the cytoplasm. The protein resides in the cytoskeleton. It is found in the microtubule organizing center. Its subcellular location is the centrosome. In terms of biological role, central scaffolding component of the centrioles ensuring their 9-fold symmetry. Required for centrosome biogenesis and duplication: required both for mother-centriole-dependent centriole duplication and deuterosome-dependent centriole amplification in multiciliated cells. In Danio rerio (Zebrafish), this protein is Spindle assembly abnormal protein 6 homolog (sass6).